The primary structure comprises 312 residues: Taste receptor type 2 member 9 (312 aa).

The Extracellular segment spans residues 1-9; it reads MPSAIEAIY. The chain crosses the membrane as a helical span at residues 10–32; sequence IILIAGELTIGIWGNGFIVLVNC. Topologically, residues 33 to 52 are cytoplasmic; the sequence is XDWLKRRDISLIDIILISLA. Residues 53–72 form a helical membrane-spanning segment; that stretch reads ISRICLLCVISLDGFFMLLF. Residues 73-86 lie on the Extracellular side of the membrane; sequence PGTYGNSVLVSIVN. Residues 87-109 form a helical membrane-spanning segment; sequence VVWTFANNSSLWFTSCLSIFYLL. Over 110-128 the chain is Cytoplasmic; it reads KIANISHPFFFWLKLKINK. The chain crosses the membrane as a helical span at residues 129–146; it reads VMLAILLGSFLISLIISV. Residues 147 to 180 lie on the Extracellular side of the membrane; the sequence is XKNDDMWYHLFKVSXEENITWEFKVSKIPGTFKQ. N-linked (GlcNAc...) asparagine glycosylation is present at Asn-164. Residues 181–203 form a helical membrane-spanning segment; that stretch reads LTLNLGGRVPFILCLISFFLLLF. Topologically, residues 204-234 are cytoplasmic; it reads SLVRHTKQIQLHATGFRDPSTEAHMRAIKAV. The helical transmembrane segment at 235–257 threads the bilayer; it reads IIFLLLLIVYYPVFLVMTSSALI. Residues 258–261 are Extracellular-facing; sequence PQGK. A helical transmembrane segment spans residues 262–284; it reads LVLMIGDIVTVIFPSSHSFILIM. At 285–312 the chain is on the cytoplasmic side; it reads GNSKLREAFLKMLRFVKGFLRRRKPFVP.

The protein belongs to the G-protein coupled receptor T2R family.

It is found in the membrane. In terms of biological role, gustducin-coupled receptor implicated in the perception of bitter compounds in the oral cavity and the gastrointestinal tract. Signals through PLCB2 and the calcium-regulated cation channel TRPM5. The protein is Taste receptor type 2 member 9 (TAS2R9) of Pan troglodytes (Chimpanzee).